We begin with the raw amino-acid sequence, 522 residues long: Protein nucleotidyltransferase YdiU (522 aa).

G109, G111, R112, K132, D144, G145, R195, and R202 together coordinate ATP. The Proton acceptor role is filled by D271. Mg(2+)-binding residues include N272 and D281. Position 281 (D281) interacts with ATP.

The protein belongs to the SELO family. The cofactor is Mg(2+). Requires Mn(2+) as cofactor.

It catalyses the reaction L-seryl-[protein] + ATP = 3-O-(5'-adenylyl)-L-seryl-[protein] + diphosphate. The catalysed reaction is L-threonyl-[protein] + ATP = 3-O-(5'-adenylyl)-L-threonyl-[protein] + diphosphate. The enzyme catalyses L-tyrosyl-[protein] + ATP = O-(5'-adenylyl)-L-tyrosyl-[protein] + diphosphate. It carries out the reaction L-histidyl-[protein] + UTP = N(tele)-(5'-uridylyl)-L-histidyl-[protein] + diphosphate. It catalyses the reaction L-seryl-[protein] + UTP = O-(5'-uridylyl)-L-seryl-[protein] + diphosphate. The catalysed reaction is L-tyrosyl-[protein] + UTP = O-(5'-uridylyl)-L-tyrosyl-[protein] + diphosphate. Its function is as follows. Nucleotidyltransferase involved in the post-translational modification of proteins. It can catalyze the addition of adenosine monophosphate (AMP) or uridine monophosphate (UMP) to a protein, resulting in modifications known as AMPylation and UMPylation. This Burkholderia ambifaria (strain MC40-6) protein is Protein nucleotidyltransferase YdiU.